Reading from the N-terminus, the 440-residue chain is Adenosylhomocysteinase (440 aa).

Substrate-binding residues include Thr64, Asp139, and Glu164. NAD(+) is bound at residue 165-167; it reads TTT. Substrate is bound by residues Lys194 and Asp198. Residues Asn199, 228 to 233, Glu251, Asn286, 307 to 309, and Asn352 each bind NAD(+); these read GFGDVG and IGH.

This sequence belongs to the adenosylhomocysteinase family. NAD(+) serves as cofactor.

The protein resides in the cytoplasm. The catalysed reaction is S-adenosyl-L-homocysteine + H2O = L-homocysteine + adenosine. It functions in the pathway amino-acid biosynthesis; L-homocysteine biosynthesis; L-homocysteine from S-adenosyl-L-homocysteine: step 1/1. Functionally, may play a key role in the regulation of the intracellular concentration of adenosylhomocysteine. The sequence is that of Adenosylhomocysteinase from Granulibacter bethesdensis (strain ATCC BAA-1260 / CGDNIH1).